The primary structure comprises 236 residues: Class B acid phosphatase (236 aa).

Residues 1 to 23 (MRKLTLTLSALALALSLNSVADA) form the signal peptide. Asp68 (nucleophile) is an active-site residue. Asp68 and Asp70 together coordinate Mg(2+). Asp70 serves as the catalytic Proton donor. Residues 136–137 (TG) and Lys176 each bind substrate. Asp191 provides a ligand contact to Mg(2+).

The protein belongs to the class B bacterial acid phosphatase family. Homotetramer. Mg(2+) is required as a cofactor.

Its subcellular location is the periplasm. The catalysed reaction is a phosphate monoester + H2O = an alcohol + phosphate. With respect to regulation, activated by ethanol. Also activated by Co(2+), Zn(2+) and glycerol. Inhibited by EDTA, inorganic phosphate, nucleosides and Ca(2+). Unaffected by fluoride and tartrate. Functionally, dephosphorylates several organic phosphate monoesters including 5'-AMP, 3'-AMP, pNPP, PDP, 5'-UMP, 3'-UMP, G2P, glucose 6-P and ribose 5-P. No activity toward organic phosphate diesters. Also has a phosphotransferase activity catalyzing the transfer of low-energy phosphate groups from organic phosphate monoesters to free hydroxyl groups of various organic compounds. This Morganella morganii (Proteus morganii) protein is Class B acid phosphatase (aphA).